The following is a 718-amino-acid chain: Heat shock 70 kDa protein 7, chloroplastic (718 aa).

The N-terminal 92 residues, M1–V92, are a transit peptide targeting the chloroplast. Residues Q668 to Q678 show a composition bias toward polar residues. The disordered stretch occupies residues Q668–N718.

It belongs to the heat shock protein 70 (TC 1.A.33) family. DnaK subfamily.

The protein resides in the plastid. Its subcellular location is the chloroplast stroma. In terms of biological role, acts redundantly with HSP70-6 in the thermotolerance of germinating seeds. Plays an important role in the protein precursor import into chloroplasts. Its function is as follows. In cooperation with other chaperones, Hsp70s are key components that facilitate folding of de novo synthesized proteins, assist translocation of precursor proteins into organelles, and are responsible for degradation of damaged protein under stress conditions. This chain is Heat shock 70 kDa protein 7, chloroplastic (HSP70-7), found in Arabidopsis thaliana (Mouse-ear cress).